The sequence spans 599 residues: Elongation factor 4 (599 aa).

The region spanning 4-186 is the tr-type G domain; it reads ENIRNFSIIA…EIVKKIPPPE (183 aa). GTP-binding positions include 16–21 and 133–136; these read DHGKST and NKID.

Belongs to the TRAFAC class translation factor GTPase superfamily. Classic translation factor GTPase family. LepA subfamily.

It localises to the cell inner membrane. It catalyses the reaction GTP + H2O = GDP + phosphate + H(+). Functionally, required for accurate and efficient protein synthesis under certain stress conditions. May act as a fidelity factor of the translation reaction, by catalyzing a one-codon backward translocation of tRNAs on improperly translocated ribosomes. Back-translocation proceeds from a post-translocation (POST) complex to a pre-translocation (PRE) complex, thus giving elongation factor G a second chance to translocate the tRNAs correctly. Binds to ribosomes in a GTP-dependent manner. This chain is Elongation factor 4, found in Geobacter metallireducens (strain ATCC 53774 / DSM 7210 / GS-15).